Here is an 84-residue protein sequence, read N- to C-terminus: Small ribosomal subunit protein bS18A (84 aa).

Belongs to the bacterial ribosomal protein bS18 family. Part of the 30S ribosomal subunit. Forms a tight heterodimer with protein bS6.

In terms of biological role, binds as a heterodimer with protein bS6 to the central domain of the 16S rRNA, where it helps stabilize the platform of the 30S subunit. This is Small ribosomal subunit protein bS18A (rpsR1) from Mycobacterium bovis (strain ATCC BAA-935 / AF2122/97).